Here is an 89-residue protein sequence, read N- to C-terminus: Mitochondrial import inner membrane translocase subunit Tim9 (89 aa).

Alanine 2 is subject to N-acetylalanine. The short motif at 28–52 is the Twin CX3C motif element; that stretch reads CFLDCVKDFTTREVKPEEVTCSEHC. 2 cysteine pairs are disulfide-bonded: cysteine 28/cysteine 52 and cysteine 32/cysteine 48.

This sequence belongs to the small Tim family. In terms of assembly, heterohexamer; composed of 3 copies of TIMM9 and 3 copies of TIMM10/TIM10A, named soluble 70 kDa complex. The complex forms a 6-bladed alpha-propeller structure and associates with the TIMM22 component of the TIM22 complex. Interacts with multi-pass transmembrane proteins in transit. Also forms a complex composed of TIMM9, TIMM10/TIM10A and FXC1/TIM10B.

Its subcellular location is the mitochondrion inner membrane. In terms of biological role, mitochondrial intermembrane chaperone that participates in the import and insertion of multi-pass transmembrane proteins into the mitochondrial inner membrane. May also be required for the transfer of beta-barrel precursors from the TOM complex to the sorting and assembly machinery (SAM complex) of the outer membrane. Acts as a chaperone-like protein that protects the hydrophobic precursors from aggregation and guide them through the mitochondrial intermembrane space. This chain is Mitochondrial import inner membrane translocase subunit Tim9 (Timm9), found in Mus musculus (Mouse).